Here is a 195-residue protein sequence, read N- to C-terminus: Imidazoleglycerol-phosphate dehydratase (195 aa).

The protein belongs to the imidazoleglycerol-phosphate dehydratase family.

The protein localises to the cytoplasm. It catalyses the reaction D-erythro-1-(imidazol-4-yl)glycerol 3-phosphate = 3-(imidazol-4-yl)-2-oxopropyl phosphate + H2O. Its pathway is amino-acid biosynthesis; L-histidine biosynthesis; L-histidine from 5-phospho-alpha-D-ribose 1-diphosphate: step 6/9. The protein is Imidazoleglycerol-phosphate dehydratase of Geobacter sulfurreducens (strain ATCC 51573 / DSM 12127 / PCA).